The chain runs to 208 residues: Coat protein (208 aa).

Belongs to the potexvirus capsid protein family.

The protein resides in the virion. Its function is as follows. Required for genome encapsidation. Forms ribonucleoprotein complexes along with TGB1 helicase and viral RNA. This is Coat protein from Trifolium (WCMV).